A 463-amino-acid chain; its full sequence is Argininosuccinate lyase (463 aa).

It belongs to the lyase 1 family. Argininosuccinate lyase subfamily.

The protein resides in the cytoplasm. It carries out the reaction 2-(N(omega)-L-arginino)succinate = fumarate + L-arginine. It functions in the pathway amino-acid biosynthesis; L-arginine biosynthesis; L-arginine from L-ornithine and carbamoyl phosphate: step 3/3. The polypeptide is Argininosuccinate lyase (Bradyrhizobium sp. (strain ORS 278)).